The chain runs to 218 residues: Deoxyribose-phosphate aldolase (218 aa).

Asp92 serves as the catalytic Proton donor/acceptor. The active-site Schiff-base intermediate with acetaldehyde is the Lys156. Lys185 serves as the catalytic Proton donor/acceptor.

Belongs to the DeoC/FbaB aldolase family. DeoC type 1 subfamily.

The protein resides in the cytoplasm. It carries out the reaction 2-deoxy-D-ribose 5-phosphate = D-glyceraldehyde 3-phosphate + acetaldehyde. It functions in the pathway carbohydrate degradation; 2-deoxy-D-ribose 1-phosphate degradation; D-glyceraldehyde 3-phosphate and acetaldehyde from 2-deoxy-alpha-D-ribose 1-phosphate: step 2/2. In terms of biological role, catalyzes a reversible aldol reaction between acetaldehyde and D-glyceraldehyde 3-phosphate to generate 2-deoxy-D-ribose 5-phosphate. In Desulfitobacterium hafniense (strain Y51), this protein is Deoxyribose-phosphate aldolase.